An 88-amino-acid polypeptide reads, in one-letter code: Large ribosomal subunit protein bL27 (88 aa).

It belongs to the bacterial ribosomal protein bL27 family.

This Acidobacterium capsulatum (strain ATCC 51196 / DSM 11244 / BCRC 80197 / JCM 7670 / NBRC 15755 / NCIMB 13165 / 161) protein is Large ribosomal subunit protein bL27.